A 261-amino-acid polypeptide reads, in one-letter code: 5-oxoprolinase subunit A (261 aa).

The protein belongs to the LamB/PxpA family. As to quaternary structure, forms a complex composed of PxpA, PxpB and PxpC.

The catalysed reaction is 5-oxo-L-proline + ATP + 2 H2O = L-glutamate + ADP + phosphate + H(+). Its function is as follows. Catalyzes the cleavage of 5-oxoproline to form L-glutamate coupled to the hydrolysis of ATP to ADP and inorganic phosphate. In Symbiobacterium thermophilum (strain DSM 24528 / JCM 14929 / IAM 14863 / T), this protein is 5-oxoprolinase subunit A.